Here is a 179-residue protein sequence, read N- to C-terminus: Peptidyl-prolyl cis-trans isomerase H (179 aa).

Residues 16–178 (FFDISIGDTP…LQVRIAECGE (163 aa)) enclose the PPIase cyclophilin-type domain.

It belongs to the cyclophilin-type PPIase family. PPIase H subfamily.

The protein localises to the nucleus. It catalyses the reaction [protein]-peptidylproline (omega=180) = [protein]-peptidylproline (omega=0). Its function is as follows. PPIases accelerate the folding of proteins. It catalyzes the cis-trans isomerization of proline imidic peptide bonds in oligopeptides. The chain is Peptidyl-prolyl cis-trans isomerase H (CYP3) from Cryptococcus neoformans var. neoformans serotype D (strain B-3501A) (Filobasidiella neoformans).